The following is a 525-amino-acid chain: GMP synthase [glutamine-hydrolyzing] (525 aa).

The 199-residue stretch at 9–207 (RILILDFGSQ…VLEICGCAAL (199 aa)) folds into the Glutamine amidotransferase type-1 domain. C86 functions as the Nucleophile in the catalytic mechanism. Residues H181 and E183 contribute to the active site. Residues 208 to 400 (WTPATIIEDA…LGLPYDMLYR (193 aa)) enclose the GMPS ATP-PPase domain. An ATP-binding site is contributed by 235–241 (SGGVDSS).

In terms of assembly, homodimer.

It carries out the reaction XMP + L-glutamine + ATP + H2O = GMP + L-glutamate + AMP + diphosphate + 2 H(+). It participates in purine metabolism; GMP biosynthesis; GMP from XMP (L-Gln route): step 1/1. Functionally, catalyzes the synthesis of GMP from XMP. This chain is GMP synthase [glutamine-hydrolyzing], found in Edwardsiella ictaluri (strain 93-146).